The primary structure comprises 117 residues: Large ribosomal subunit protein uL18 (117 aa).

It belongs to the universal ribosomal protein uL18 family. As to quaternary structure, part of the 50S ribosomal subunit; part of the 5S rRNA/L5/L18/L25 subcomplex. Contacts the 5S and 23S rRNAs.

Its function is as follows. This is one of the proteins that bind and probably mediate the attachment of the 5S RNA into the large ribosomal subunit, where it forms part of the central protuberance. The protein is Large ribosomal subunit protein uL18 of Tolumonas auensis (strain DSM 9187 / NBRC 110442 / TA 4).